Here is a 59-residue protein sequence, read N- to C-terminus: UPF0434 protein Shew185_1670 (59 aa).

This sequence belongs to the UPF0434 family.

This Shewanella baltica (strain OS185) protein is UPF0434 protein Shew185_1670.